A 348-amino-acid chain; its full sequence is tRNA N6-adenosine threonylcarbamoyltransferase (348 aa).

Fe cation contacts are provided by His-114 and His-118. Substrate-binding positions include 137–141 (LVSGG), Asp-171, Gly-184, Asp-188, and Asn-283. Asp-311 is a binding site for Fe cation.

It belongs to the KAE1 / TsaD family. It depends on Fe(2+) as a cofactor.

It localises to the cytoplasm. The catalysed reaction is L-threonylcarbamoyladenylate + adenosine(37) in tRNA = N(6)-L-threonylcarbamoyladenosine(37) in tRNA + AMP + H(+). In terms of biological role, required for the formation of a threonylcarbamoyl group on adenosine at position 37 (t(6)A37) in tRNAs that read codons beginning with adenine. Is involved in the transfer of the threonylcarbamoyl moiety of threonylcarbamoyl-AMP (TC-AMP) to the N6 group of A37, together with TsaE and TsaB. TsaD likely plays a direct catalytic role in this reaction. This is tRNA N6-adenosine threonylcarbamoyltransferase from Nocardioides sp. (strain ATCC BAA-499 / JS614).